The following is a 182-amino-acid chain: Glutathione-regulated potassium-efflux system ancillary protein KefG (182 aa).

It belongs to the NAD(P)H dehydrogenase (quinone) family. KefG subfamily. As to quaternary structure, interacts with KefB.

It is found in the cell inner membrane. It carries out the reaction a quinone + NADH + H(+) = a quinol + NAD(+). It catalyses the reaction a quinone + NADPH + H(+) = a quinol + NADP(+). Functionally, regulatory subunit of a potassium efflux system that confers protection against electrophiles. Required for full activity of KefB. In Yersinia pseudotuberculosis serotype O:1b (strain IP 31758), this protein is Glutathione-regulated potassium-efflux system ancillary protein KefG.